Reading from the N-terminus, the 311-residue chain is tRNA dimethylallyltransferase (311 aa).

ATP is bound at residue 10–17 (GPTAVGKS). 12-17 (TAVGKS) provides a ligand contact to substrate. Positions 35-38 (DSMQ) are interaction with substrate tRNA.

This sequence belongs to the IPP transferase family. In terms of assembly, monomer. Mg(2+) serves as cofactor.

It carries out the reaction adenosine(37) in tRNA + dimethylallyl diphosphate = N(6)-dimethylallyladenosine(37) in tRNA + diphosphate. In terms of biological role, catalyzes the transfer of a dimethylallyl group onto the adenine at position 37 in tRNAs that read codons beginning with uridine, leading to the formation of N6-(dimethylallyl)adenosine (i(6)A). The polypeptide is tRNA dimethylallyltransferase (Carboxydothermus hydrogenoformans (strain ATCC BAA-161 / DSM 6008 / Z-2901)).